The chain runs to 490 residues: Nuclear transcription factor Y subunit beta (490 aa).

Positions 1-48 (MSGNEDFIYDDNSSSSISNQTDGGGGGGSSNNNSGGNANNNNNEGDRE) are disordered. The span at 30-43 (SNNNSGGNANNNNN) shows a compositional bias: low complexity. A DNA-binding region spans residues 53-59 (LPIANII). The subunit association domain (SAD) stretch occupies residues 80–91 (VQDCVSEFISFI). Disordered stretches follow at residues 139–195 (EKNS…QQQQ) and 221–264 (QQQQ…NQQY). Over residues 181–195 (QQQQQPPQVQQQQQQ) the composition is skewed to low complexity. Residues 188 to 219 (QVQQQQQQQQQQQQQQLQQQQQLQQHQQQQLQ) adopt a coiled-coil conformation. The stretch at 269–307 (QQQQQQQQQQQQQQQQQQQQQQQQQQQQQQQQQQQQQVQ) forms a coiled coil. 2 disordered regions span residues 325–370 (NQQA…QHLQ) and 399–490 (QFSN…PSTS). Residues 399-468 (QFSNNNNNNN…GNSLHNSGNS (70 aa)) show a composition bias toward low complexity. Positions 478-490 (PYISTNPEYPSTS) are enriched in polar residues.

Belongs to the NFYB/HAP3 subunit family. Heterotrimeric transcription factor composed of three components, nfyA, nfyB and nfyC. nfyB and nfyC must interact and dimerize for nfyA association and DNA binding.

The protein resides in the nucleus. In terms of biological role, component of the NF-Y/HAP transcription factor complex. The NF-Y complex stimulates the transcription of various genes by recognizing and binding to a CCAAT motif in promoters. This is Nuclear transcription factor Y subunit beta (nfyB) from Dictyostelium discoideum (Social amoeba).